The primary structure comprises 60 residues: MKVEELIERINYLYKKSKEEGLTEEEKIEQAELREKYLKNIRSNFRAQLESIGGVSKKQS.

It belongs to the UPF0291 family.

Its subcellular location is the cytoplasm. In Clostridium tetani (strain Massachusetts / E88), this protein is UPF0291 protein CTC_01690.1.